Reading from the N-terminus, the 314-residue chain is Ribosomal RNA small subunit methyltransferase H (314 aa).

Residues 37–39 (GGH), D57, F83, D105, and Q112 contribute to the S-adenosyl-L-methionine site.

This sequence belongs to the methyltransferase superfamily. RsmH family.

Its subcellular location is the cytoplasm. The enzyme catalyses cytidine(1402) in 16S rRNA + S-adenosyl-L-methionine = N(4)-methylcytidine(1402) in 16S rRNA + S-adenosyl-L-homocysteine + H(+). Specifically methylates the N4 position of cytidine in position 1402 (C1402) of 16S rRNA. This chain is Ribosomal RNA small subunit methyltransferase H, found in Thioalkalivibrio sulfidiphilus (strain HL-EbGR7).